The chain runs to 73 residues: Translation initiation factor IF-1 (73 aa).

One can recognise an S1-like domain in the interval 1 to 72 (MAKEDVIEVE…SRGRITYRYR (72 aa)).

The protein belongs to the IF-1 family. Component of the 30S ribosomal translation pre-initiation complex which assembles on the 30S ribosome in the order IF-2 and IF-3, IF-1 and N-formylmethionyl-tRNA(fMet); mRNA recruitment can occur at any time during PIC assembly.

It localises to the cytoplasm. In terms of biological role, one of the essential components for the initiation of protein synthesis. Stabilizes the binding of IF-2 and IF-3 on the 30S subunit to which N-formylmethionyl-tRNA(fMet) subsequently binds. Helps modulate mRNA selection, yielding the 30S pre-initiation complex (PIC). Upon addition of the 50S ribosomal subunit IF-1, IF-2 and IF-3 are released leaving the mature 70S translation initiation complex. The protein is Translation initiation factor IF-1 of Rubrobacter xylanophilus (strain DSM 9941 / JCM 11954 / NBRC 16129 / PRD-1).